We begin with the raw amino-acid sequence, 199 residues long: Peptidyl-tRNA hydrolase (199 aa).

Tyr18 serves as a coordination point for tRNA. Catalysis depends on His23, which acts as the Proton acceptor. The tRNA site is built by Tyr69, Asn71, and Asn117.

This sequence belongs to the PTH family. As to quaternary structure, monomer.

It localises to the cytoplasm. It carries out the reaction an N-acyl-L-alpha-aminoacyl-tRNA + H2O = an N-acyl-L-amino acid + a tRNA + H(+). Functionally, hydrolyzes ribosome-free peptidyl-tRNAs (with 1 or more amino acids incorporated), which drop off the ribosome during protein synthesis, or as a result of ribosome stalling. Its function is as follows. Catalyzes the release of premature peptidyl moieties from peptidyl-tRNA molecules trapped in stalled 50S ribosomal subunits, and thus maintains levels of free tRNAs and 50S ribosomes. The sequence is that of Peptidyl-tRNA hydrolase from Prochlorococcus marinus (strain MIT 9515).